Reading from the N-terminus, the 327-residue chain is Flap endonuclease 1 (327 aa).

The N-domain stretch occupies residues 1–100; it reads MGNADLRQLA…DEIADRREQR (100 aa). Residues Asp28, Asp82, Glu154, Glu156, Asp176, Asp178, and Asp226 each contribute to the Mg(2+) site. The I-domain stretch occupies residues 118-247; that stretch reads EAARLDARTQ…TALDAIGEHG (130 aa). Positions 319-327 are interaction with PCNA; sequence AQTGLDRWT.

Belongs to the XPG/RAD2 endonuclease family. FEN1 subfamily. In terms of assembly, interacts with PCNA. PCNA stimulates the nuclease activity without altering cleavage specificity. It depends on Mg(2+) as a cofactor.

Functionally, structure-specific nuclease with 5'-flap endonuclease and 5'-3' exonuclease activities involved in DNA replication and repair. During DNA replication, cleaves the 5'-overhanging flap structure that is generated by displacement synthesis when DNA polymerase encounters the 5'-end of a downstream Okazaki fragment. Binds the unpaired 3'-DNA end and kinks the DNA to facilitate 5' cleavage specificity. Cleaves one nucleotide into the double-stranded DNA from the junction in flap DNA, leaving a nick for ligation. Also involved in the base excision repair (BER) pathway. Acts as a genome stabilization factor that prevents flaps from equilibrating into structures that lead to duplications and deletions. Also possesses 5'-3' exonuclease activity on nicked or gapped double-stranded DNA. This Halobacterium salinarum (strain ATCC 29341 / DSM 671 / R1) protein is Flap endonuclease 1.